The chain runs to 198 residues: Na(+)-translocating NADH-quinone reductase subunit E (198 aa).

Transmembrane regions (helical) follow at residues 11-31 (SIFI…FLAV), 39-59 (FGLG…NNLV), 77-97 (FLNF…LEMI), 110-130 (GIFL…SFMV), 140-160 (IVYG…LAGI), and 176-196 (LGIT…FSGV).

The protein belongs to the NqrDE/RnfAE family. In terms of assembly, composed of six subunits; NqrA, NqrB, NqrC, NqrD, NqrE and NqrF.

It is found in the cell inner membrane. It carries out the reaction a ubiquinone + n Na(+)(in) + NADH + H(+) = a ubiquinol + n Na(+)(out) + NAD(+). NQR complex catalyzes the reduction of ubiquinone-1 to ubiquinol by two successive reactions, coupled with the transport of Na(+) ions from the cytoplasm to the periplasm. NqrA to NqrE are probably involved in the second step, the conversion of ubisemiquinone to ubiquinol. The protein is Na(+)-translocating NADH-quinone reductase subunit E of Photobacterium profundum (strain SS9).